The chain runs to 163 residues: Photosystem II extrinsic protein V (163 aa).

Positions 1–26 (MFRRLIGVVVATVLLTFQLIVGSATA) are cleaved as a signal peptide. Residues C63, C66, H67, and H118 each contribute to the heme c site.

This sequence belongs to the cytochrome c family. PsbV subfamily. As to quaternary structure, PSII is composed of 1 copy each of membrane proteins PsbA, PsbB, PsbC, PsbD, PsbE, PsbF, PsbH, PsbI, PsbJ, PsbK, PsbL, PsbM, PsbT, PsbX, PsbY, PsbZ, Psb30/Ycf12, peripheral proteins PsbO, CyanoQ (PsbQ), PsbU, PsbV and a large number of cofactors. It forms dimeric complexes. The cofactor is heme c.

Its subcellular location is the cellular thylakoid membrane. One of the extrinsic, lumenal subunits of photosystem II (PSII). PSII is a light-driven water plastoquinone oxidoreductase, using light energy to abstract electrons from H(2)O, generating a proton gradient subsequently used for ATP formation. The extrinsic proteins stabilize the structure of photosystem II oxygen-evolving complex (OEC), the ion environment of oxygen evolution and protect the OEC against heat-induced inactivation. Low-potential cytochrome c that plays a role in the OEC of PSII. The chain is Photosystem II extrinsic protein V from Trichormus variabilis (strain ATCC 29413 / PCC 7937) (Anabaena variabilis).